Reading from the N-terminus, the 166-residue chain is AP-3 complex subunit sigma (166 aa).

Belongs to the adaptor complexes small subunit family. In terms of assembly, adaptor protein complex 3 (AP-3) is a heterotetramer composed of two large adaptins (delta-type subunit and beta-type subunit), a medium adaptin (mu-type subunit) and a small adaptin (sigma-type subunit).

The protein localises to the cytoplasm. It localises to the golgi apparatus. It is found in the cytoplasmic vesicle membrane. Part of the AP-3 complex, an adaptor-related complex which seems to be clathrin-associated. The complex is associated with the Golgi region as well as more peripheral structures. It facilitates the budding of vesicles from the Golgi membrane and may be directly involved in trafficking to the vacuole. It also function in maintaining the identity of lytic vacuoles and in regulating the transition between storage and lytic vacuoles. The polypeptide is AP-3 complex subunit sigma (Arabidopsis thaliana (Mouse-ear cress)).